The following is a 206-amino-acid chain: Thymidylate kinase (206 aa).

Position 11-18 (11-18 (GIDGAGKT)) interacts with ATP.

The protein belongs to the thymidylate kinase family.

It carries out the reaction dTMP + ATP = dTDP + ADP. Phosphorylation of dTMP to form dTDP in both de novo and salvage pathways of dTTP synthesis. The sequence is that of Thymidylate kinase from Burkholderia pseudomallei (strain 1106a).